The following is a 290-amino-acid chain: 33 kDa chaperonin (290 aa).

Disulfide bonds link cysteine 235–cysteine 237 and cysteine 268–cysteine 271.

Belongs to the HSP33 family. Post-translationally, under oxidizing conditions two disulfide bonds are formed involving the reactive cysteines. Under reducing conditions zinc is bound to the reactive cysteines and the protein is inactive.

Its subcellular location is the cytoplasm. Its function is as follows. Redox regulated molecular chaperone. Protects both thermally unfolding and oxidatively damaged proteins from irreversible aggregation. Plays an important role in the bacterial defense system toward oxidative stress. In Streptococcus pyogenes serotype M28 (strain MGAS6180), this protein is 33 kDa chaperonin.